Consider the following 332-residue polypeptide: Diaminopimelate epimerase (332 aa).

Residues N13 and N73 each coordinate substrate. C82 (proton donor) is an active-site residue. Substrate contacts are provided by residues 83-84 (GN), N172, N209, and 227-228 (ER). The active-site Proton acceptor is C236. 237-238 (GT) serves as a coordination point for substrate.

The protein belongs to the diaminopimelate epimerase family. Homodimer.

It is found in the cytoplasm. The enzyme catalyses (2S,6S)-2,6-diaminopimelate = meso-2,6-diaminopimelate. The protein operates within amino-acid biosynthesis; L-lysine biosynthesis via DAP pathway; DL-2,6-diaminopimelate from LL-2,6-diaminopimelate: step 1/1. Catalyzes the stereoinversion of LL-2,6-diaminopimelate (L,L-DAP) to meso-diaminopimelate (meso-DAP), a precursor of L-lysine and an essential component of the bacterial peptidoglycan. The sequence is that of Diaminopimelate epimerase from Lactiplantibacillus plantarum (strain ATCC BAA-793 / NCIMB 8826 / WCFS1) (Lactobacillus plantarum).